Reading from the N-terminus, the 460-residue chain is UDP-N-acetylmuramate--L-alanine ligase (460 aa).

Residue 119-125 (GSHGKTT) coordinates ATP.

The protein belongs to the MurCDEF family.

Its subcellular location is the cytoplasm. It catalyses the reaction UDP-N-acetyl-alpha-D-muramate + L-alanine + ATP = UDP-N-acetyl-alpha-D-muramoyl-L-alanine + ADP + phosphate + H(+). It functions in the pathway cell wall biogenesis; peptidoglycan biosynthesis. Cell wall formation. This chain is UDP-N-acetylmuramate--L-alanine ligase, found in Alkaliphilus metalliredigens (strain QYMF).